The following is a 286-amino-acid chain: Simplagrin (286 aa).

The first 20 residues, 1 to 20 (MKKFCLIFLLLALTALHVKG), serve as a signal peptide directing secretion. A disordered region spans residues 17 to 179 (HVKGSPIPDE…GSSSGGEESA (163 aa)). Composition is skewed to acidic residues over residues 24-69 (PDEE…DGQE) and 103-129 (VESG…TGGE). N-linked (GlcNAc...) asparagine glycosylation occurs at N116. A compositionally biased stretch (low complexity) spans 166-177 (SNRAGSSSGGEE).

This sequence belongs to the aegyptin family. As to quaternary structure, monomeric in solution; likely has an elongated non-globular form. Interacts with human and rat collagens (via a RGQOGVMGF peptide, where O is hydroxyproline). Post-translationally, not glycosylated. Salivary gland.

The protein localises to the secreted. In terms of biological role, inhibits host platelet aggregation induced by low concentrations of collagen via blocking the von Willebrand Factor (VWF) interaction with collagen. The polypeptide is Simplagrin (Simulium nigrimanum (Black fly)).